Reading from the N-terminus, the 89-residue chain is Small ribosomal subunit protein bS20 (89 aa).

The protein belongs to the bacterial ribosomal protein bS20 family.

Its function is as follows. Binds directly to 16S ribosomal RNA. In Helicobacter acinonychis (strain Sheeba), this protein is Small ribosomal subunit protein bS20.